A 159-amino-acid chain; its full sequence is Dehydratase GME11372 (159 aa).

Residues His79 and His104 contribute to the active site.

Belongs to the scytalone dehydratase family. As to quaternary structure, homotrimer. Each subunit contains an active site, located in the central part of the hydrophobic core of the monomer, which functions independently.

It participates in secondary metabolite biosynthesis. Functionally, dehydratase; part of the gene cluster that mediates the biosynthesis of dibenzodioxocinones such as pestalotiollide B, a novel class of inhibitors against cholesterol ester transfer protein (CEPT). The biosynthesis initiates from condensation of acetate and malonate units catalyzed by the non-reducing PKS pks8/GME11356. Pks8/GME11356 lacks a thioesterase (TE) domain, which is important to the cyclizing of the third ring of atrochrysone carboxylic acid, and the esterase GME11355 might play the role of TE and catalyzes the cyclization reaction of the C ring. The lactamase-like protein GME11357 (or other beta-lactamases in Pestalotiopsis microspora) probably hydrolyzes the thioester bond between the ACP of pks8/GME11356 and the intermediate to release atrochrysone carboxylic acid, which is spontaneously dehydrates to form endocrocin anthrone. Endocrocin anthrone is further converted to emodin via the endocrocin intermediate. Emodin is then oxidized by several enzymes such as the Baeyer-Villiger oxidase GME11358, the oxidoreductase GME11367, the short chain dehydrogenase/reductase GME11373, as well as by other oxidoreductases from the cluster, to modify the A and C rings and open the B ring, and finally yield monodictyphenone. The prenyltransferase GME11375 may catalyze the addition reaction between the C5 side chains and the carbon bone of dibenzodioxocinones. The remaining biochemical reactions to the final product dibenzodioxocinones should be methylation catalyzed by methyltransferase GME11366 and reduction and lactonization reaction catalyzed by a series of oxidordeuctases. The polypeptide is Dehydratase GME11372 (Pestalotiopsis microspora).